The chain runs to 178 residues: Mediator of RNA polymerase II transcription subunit 28 (178 aa).

The tract at residues 1-43 (MAASLGGMFAGQPPGPPPPPPGLPGQASLLQAAPGAPRPSNST) is disordered. The segment covering 13 to 23 (PPGPPPPPPGL) has biased composition (pro residues). Residues 109–145 (QVIKEDVSELRSELQRKDALVQKHLTKLRHWQQVLED) are a coiled coil.

It belongs to the Mediator complex subunit 28 family. Forms a ternary complex with NF2/merlin and GRB2. Binds to actin. Component of the Mediator complex, which is probably composed of MED1, MED4, MED6, MED7, MED8, MED9, MED10, MED11, MED12, MED13, MED13L, MED14, MED15, MED16, MED17, MED18, MED19, MED20, MED21, MED22, MED23, MED24, MED25, MED26, MED27, MED29, MED30, MED31, CCNC, CDK8 and CDC2L6/CDK11. The MED12, MED13, CCNC and CDK8 subunits form a distinct module termed the CDK8 module. Mediator containing the CDK8 module is less active than Mediator lacking this module in supporting transcriptional activation. Individual preparations of the Mediator complex lacking one or more distinct subunits have been variously termed ARC, CRSP, DRIP, PC2, SMCC and TRAP.

The protein resides in the nucleus. The protein localises to the cytoplasm. Its subcellular location is the membrane. Functionally, may be part of a complex containing NF2/merlin that participates in cellular signaling to the actin cytoskeleton downstream of tyrosine kinase signaling pathways. Component of the Mediator complex, a coactivator involved in the regulated transcription of nearly all RNA polymerase II-dependent genes. Mediator functions as a bridge to convey information from gene-specific regulatory proteins to the basal RNA polymerase II transcription machinery. Mediator is recruited to promoters by direct interactions with regulatory proteins and serves as a scaffold for the assembly of a functional preinitiation complex with RNA polymerase II and the general transcription factors. The chain is Mediator of RNA polymerase II transcription subunit 28 (Med28) from Rattus norvegicus (Rat).